The chain runs to 377 residues: Chaperone protein DnaJ (377 aa).

Residues 5–70 (DYYEILGVSK…EKRSAYDQYG (66 aa)) enclose the J domain. The CR-type zinc-finger motif lies at 131–209 (GVVREICVPT…CRGSGRIERT (79 aa)). Zn(2+) contacts are provided by C144, C147, C161, C164, C183, C186, C197, and C200. CXXCXGXG motif repeat units follow at residues 144–151 (CLQCRGSG), 161–168 (CVTCHGHG), 183–190 (CPSCNGHG), and 197–204 (CNKCRGSG).

It belongs to the DnaJ family. In terms of assembly, homodimer. Zn(2+) serves as cofactor.

It localises to the cytoplasm. Its function is as follows. Participates actively in the response to hyperosmotic and heat shock by preventing the aggregation of stress-denatured proteins and by disaggregating proteins, also in an autonomous, DnaK-independent fashion. Unfolded proteins bind initially to DnaJ; upon interaction with the DnaJ-bound protein, DnaK hydrolyzes its bound ATP, resulting in the formation of a stable complex. GrpE releases ADP from DnaK; ATP binding to DnaK triggers the release of the substrate protein, thus completing the reaction cycle. Several rounds of ATP-dependent interactions between DnaJ, DnaK and GrpE are required for fully efficient folding. Also involved, together with DnaK and GrpE, in the DNA replication of plasmids through activation of initiation proteins. This is Chaperone protein DnaJ from Blochmanniella floridana.